The chain runs to 243 residues: E3 ubiquitin-protein ligase RMA3 (243 aa).

An RING-type zinc finger spans residues 44–92 (CNICLDTAHDPVVTLCGHLFCWPCIYKWLHVQLSSVSVDQHQNNCPVCK). The segment at 110–135 (SPSSTFGSKKQDALSTDIPRRPAPSA) is disordered. Residues 223 to 243 (KSLNRVSIFFLCCIILCLLLF) traverse the membrane as a helical; Anchor for type IV membrane protein segment.

As to expression, ubiquitous. Highly expressed in roots.

It is found in the endoplasmic reticulum membrane. It catalyses the reaction S-ubiquitinyl-[E2 ubiquitin-conjugating enzyme]-L-cysteine + [acceptor protein]-L-lysine = [E2 ubiquitin-conjugating enzyme]-L-cysteine + N(6)-ubiquitinyl-[acceptor protein]-L-lysine.. The protein operates within protein modification; protein ubiquitination. E3 ubiquitin-protein ligase. The polypeptide is E3 ubiquitin-protein ligase RMA3 (RMA3) (Arabidopsis thaliana (Mouse-ear cress)).